The sequence spans 269 residues: Small ribosomal subunit protein uS2 (269 aa).

The protein belongs to the universal ribosomal protein uS2 family.

This chain is Small ribosomal subunit protein uS2 (rpsB), found in Synechocystis sp. (strain ATCC 27184 / PCC 6803 / Kazusa).